The following is a 558-amino-acid chain: Cytochrome c oxidase subunit 1-beta (558 aa).

The Cytoplasmic portion of the chain corresponds to 1–28; it reads MADAAVHGHGDHHDTRGFFTRWFMSTNH. The helical transmembrane segment at 29–59 threads the bilayer; it reads KDIGILYLFTAGIVGLISVCFTVYMRMELQH. At 60–82 the chain is on the periplasmic side; sequence PGVQYMCLEGARLIADASAECTP. A disulfide bond links C66 and C80. A helical transmembrane segment spans residues 83-120; it reads NGHLWNVMITYHGVLMMFFVVIPALFGGFGNYFMPLHI. H94 contacts Fe(II)-heme a. The Cytoplasmic portion of the chain corresponds to 121–126; the sequence is GAPDMA. The helical transmembrane segment at 127-151 threads the bilayer; the sequence is FPRLNNLSYWMYVCGVALGVASLLA. The Periplasmic segment spans residues 152 to 176; it reads PGGNDQMGSGVGWVLYPPLSTTEAG. Residues 177–206 form a helical membrane-spanning segment; sequence YSMDLAIFAVHVSGASSILGAINIITTFLN. The Cytoplasmic portion of the chain corresponds to 207–217; it reads MRAPGMTLFKV. Residues 218-251 form a helical membrane-spanning segment; the sequence is PLFAWSVFITAWLILLSLPVLAGAITMLLMDRNF. Over 252-262 the chain is Periplasmic; it reads GTQFFDPAGGG. The helical transmembrane segment at 263-299 threads the bilayer; it reads DPVLYQHILWFFGHPEVYIIILPGFGIISHVISTFAK. Cu cation-binding residues include H276 and Y280. Residues 276–280 constitute a cross-link (1'-histidyl-3'-tyrosine (His-Tyr)); it reads HPEVY. Over 300–303 the chain is Cytoplasmic; it reads KPIF. A helical membrane pass occupies residues 304 to 331; it reads GYLPMVLAMAAIGILGFVVWAHHMYTAG. 2 residues coordinate Cu cation: H325 and H326. Residue M332 is a topological domain, periplasmic. The chain crosses the membrane as a helical span at residues 333 to 364; sequence SLTQQAYFMLATMTIAVPTGIKVFSWIATMWG. Residues 365 to 369 are Cytoplasmic-facing; sequence GSIEF. The helical transmembrane segment at 370 to 395 threads the bilayer; the sequence is KTPMLWAFGFLFLFTVGGVTGVVLSQ. Over 396–404 the chain is Periplasmic; that stretch reads APLDRVYHD. A helical membrane pass occupies residues 405–437; sequence TYYVVAHFHYVMSLGAVFGIFAGVYYWIGKMSG. H411 lines the heme a3 pocket. H413 lines the Fe(II)-heme a pocket. Topologically, residues 438–440 are cytoplasmic; it reads RQY. Residues 441-469 form a helical membrane-spanning segment; that stretch reads PEWAGQLHFWMMFIGSNLIFFPQHFLGRQ. The Periplasmic portion of the chain corresponds to 470–478; sequence GMPRRYIDY. A helical membrane pass occupies residues 479–514; sequence PVEFAYWNNISSIGAYISFASFLFFIGIVFYTLFAG. Topologically, residues 515–558 are cytoplasmic; it reads KRVNVPNYWNEHADTLEWTLPSPPPEHTFETLPKREDWDRAHAH.

It belongs to the heme-copper respiratory oxidase family. Cu(2+) serves as cofactor. It depends on heme as a cofactor. In terms of processing, his-276 and Tyr-280 are involved in the formation of a copper-coordinated covalent cross-link at the active site of the catalytic subunit I.

It localises to the cell inner membrane. The catalysed reaction is 4 Fe(II)-[cytochrome c] + O2 + 8 H(+)(in) = 4 Fe(III)-[cytochrome c] + 2 H2O + 4 H(+)(out). It functions in the pathway energy metabolism; oxidative phosphorylation. Its function is as follows. Subunit I and II form the functional core of the enzyme complex. Electrons originating in cytochrome c are transferred via heme a and Cu(A) to the binuclear center formed by heme a3 and Cu(B). This cytochrome c oxidase shows proton pump activity across the membrane in addition to the electron transfer. This Paracoccus denitrificans protein is Cytochrome c oxidase subunit 1-beta (ctaDII).